Here is a 254-residue protein sequence, read N- to C-terminus: Ubiquinone/menaquinone biosynthesis C-methyltransferase UbiE (254 aa).

S-adenosyl-L-methionine-binding positions include T77, D98, 126–127, and S143; that span reads NA.

The protein belongs to the class I-like SAM-binding methyltransferase superfamily. MenG/UbiE family.

The catalysed reaction is a 2-demethylmenaquinol + S-adenosyl-L-methionine = a menaquinol + S-adenosyl-L-homocysteine + H(+). The enzyme catalyses a 2-methoxy-6-(all-trans-polyprenyl)benzene-1,4-diol + S-adenosyl-L-methionine = a 5-methoxy-2-methyl-3-(all-trans-polyprenyl)benzene-1,4-diol + S-adenosyl-L-homocysteine + H(+). It participates in quinol/quinone metabolism; menaquinone biosynthesis; menaquinol from 1,4-dihydroxy-2-naphthoate: step 2/2. The protein operates within cofactor biosynthesis; ubiquinone biosynthesis. Its function is as follows. Methyltransferase required for the conversion of demethylmenaquinol (DMKH2) to menaquinol (MKH2) and the conversion of 2-polyprenyl-6-methoxy-1,4-benzoquinol (DDMQH2) to 2-polyprenyl-3-methyl-6-methoxy-1,4-benzoquinol (DMQH2). The polypeptide is Ubiquinone/menaquinone biosynthesis C-methyltransferase UbiE (Blochmanniella floridana).